We begin with the raw amino-acid sequence, 56 residues long: Large ribosomal subunit protein bL32 (56 aa).

The interval 1–27 (MAVQQNKKSRSRRDMRRSHDALTTAAV) is disordered. Over residues 7–16 (KKSRSRRDMR) the composition is skewed to basic residues.

Belongs to the bacterial ribosomal protein bL32 family.

The chain is Large ribosomal subunit protein bL32 from Actinobacillus pleuropneumoniae serotype 7 (strain AP76).